The following is a 588-amino-acid chain: Juvenile hormone esterase (588 aa).

Residues 1-23 form the signal peptide; it reads MKFPKNLFLVLFYTSWKFCDVCA. N-linked (GlcNAc...) asparagine glycans are attached at residues N79 and N83. Cysteines 91 and 109 form a disulfide. S214 acts as the Acyl-ester intermediate in catalysis. N257 carries an N-linked (GlcNAc...) asparagine glycan. C268 and C281 form a disulfide bridge. Catalysis depends on E350, which acts as the Charge relay system. Residues N389, N396, and N472 are each glycosylated (N-linked (GlcNAc...) asparagine). Catalysis depends on H479, which acts as the Charge relay system.

Belongs to the type-B carboxylesterase/lipase family.

The protein localises to the secreted. The catalysed reaction is juvenile hormone III + H2O = juvenile hormone III carboxylate + methanol + H(+). Its activity is regulated as follows. Inhibited by 3-octylthio-1,1,1-trifluoro-2-propanone (OTFP), a specific inhibitor of juvenile hormone esterase (JHE), but not by diisopropyl fluorophosphate (DFP), a serine enzyme inhibitor. Functionally, may function as a juvenile hormone (JH)-specific degradation enzyme in vivo decreasing JH activity. Hydrolyzes JH III in vitro. Hydrolyzes effectively also methyl hepthylthioacetothioate (HEPTAT), a synthetic substrate. Of the general esterase substrates, it has preference for 2-naphthyl acetate (2-NA) and shows a weak activity for 1-NA and 4-nitrophenylacetate (4-NPA). The polypeptide is Juvenile hormone esterase (Tribolium castaneum (Red flour beetle)).